Here is a 463-residue protein sequence, read N- to C-terminus: ATP-dependent protease ATPase subunit HslU (463 aa).

ATP is bound by residues I19, 61–66 (GVGKTE), D277, E341, and R413.

This sequence belongs to the ClpX chaperone family. HslU subfamily. In terms of assembly, a double ring-shaped homohexamer of HslV is capped on each side by a ring-shaped HslU homohexamer. The assembly of the HslU/HslV complex is dependent on binding of ATP.

The protein localises to the cytoplasm. ATPase subunit of a proteasome-like degradation complex; this subunit has chaperone activity. The binding of ATP and its subsequent hydrolysis by HslU are essential for unfolding of protein substrates subsequently hydrolyzed by HslV. HslU recognizes the N-terminal part of its protein substrates and unfolds these before they are guided to HslV for hydrolysis. The protein is ATP-dependent protease ATPase subunit HslU of Bacillus cereus (strain 03BB102).